We begin with the raw amino-acid sequence, 369 residues long: Peptide chain release factor 2 (369 aa).

Glutamine 249 is modified (N5-methylglutamine).

The protein belongs to the prokaryotic/mitochondrial release factor family. In terms of processing, methylated by PrmC. Methylation increases the termination efficiency of RF2.

The protein resides in the cytoplasm. In terms of biological role, peptide chain release factor 2 directs the termination of translation in response to the peptide chain termination codons UGA and UAA. The polypeptide is Peptide chain release factor 2 (Thermosipho melanesiensis (strain DSM 12029 / CIP 104789 / BI429)).